The sequence spans 220 residues: Ribosomal RNA large subunit methyltransferase E (220 aa).

Residues Gly60, Trp62, Asp92, Asp108, and Asp133 each contribute to the S-adenosyl-L-methionine site. Lys173 (proton acceptor) is an active-site residue.

Belongs to the class I-like SAM-binding methyltransferase superfamily. RNA methyltransferase RlmE family.

The protein localises to the cytoplasm. The catalysed reaction is uridine(2552) in 23S rRNA + S-adenosyl-L-methionine = 2'-O-methyluridine(2552) in 23S rRNA + S-adenosyl-L-homocysteine + H(+). In terms of biological role, specifically methylates the uridine in position 2552 of 23S rRNA at the 2'-O position of the ribose in the fully assembled 50S ribosomal subunit. In Paraburkholderia phytofirmans (strain DSM 17436 / LMG 22146 / PsJN) (Burkholderia phytofirmans), this protein is Ribosomal RNA large subunit methyltransferase E.